Consider the following 294-residue polypeptide: MSNLKEIKRKIKSVHNTQKTTNAMKLVSTAKLKKAEEAAKRSKIYAQKIDEILSEISFQINKIVHNEDDVRLSLFHKKEQIKTVDLIFITADKGLCGGFNIKTLKAVSEMLKEYEAKNINIRLRAIGKTGIEYFNFQKIELLEKYFHLSSSPDYEKACEVIHAAVDDFLNGNTDEVILVHNGYKNMITQELKINHLIPVEPKSIEQTHNSLLELEPEGTELLEDLMKTYFEYNMYYALIDSLAAEHSARMQAMDNATNNAKARVKQLNLAYNKARQESITTELIEIISGVESMK.

Belongs to the ATPase gamma chain family. In terms of assembly, F-type ATPases have 2 components, CF(1) - the catalytic core - and CF(0) - the membrane proton channel. CF(1) has five subunits: alpha(3), beta(3), gamma(1), delta(1), epsilon(1). CF(0) has three main subunits: a, b and c.

The protein localises to the cell inner membrane. Functionally, produces ATP from ADP in the presence of a proton gradient across the membrane. The gamma chain is believed to be important in regulating ATPase activity and the flow of protons through the CF(0) complex. This chain is ATP synthase gamma chain, found in Campylobacter jejuni subsp. jejuni serotype O:6 (strain 81116 / NCTC 11828).